Reading from the N-terminus, the 486-residue chain is Aspartyl/glutamyl-tRNA(Asn/Gln) amidotransferase subunit B (486 aa).

Belongs to the GatB/GatE family. GatB subfamily. As to quaternary structure, heterotrimer of A, B and C subunits.

It carries out the reaction L-glutamyl-tRNA(Gln) + L-glutamine + ATP + H2O = L-glutaminyl-tRNA(Gln) + L-glutamate + ADP + phosphate + H(+). The enzyme catalyses L-aspartyl-tRNA(Asn) + L-glutamine + ATP + H2O = L-asparaginyl-tRNA(Asn) + L-glutamate + ADP + phosphate + 2 H(+). In terms of biological role, allows the formation of correctly charged Asn-tRNA(Asn) or Gln-tRNA(Gln) through the transamidation of misacylated Asp-tRNA(Asn) or Glu-tRNA(Gln) in organisms which lack either or both of asparaginyl-tRNA or glutaminyl-tRNA synthetases. The reaction takes place in the presence of glutamine and ATP through an activated phospho-Asp-tRNA(Asn) or phospho-Glu-tRNA(Gln). The polypeptide is Aspartyl/glutamyl-tRNA(Asn/Gln) amidotransferase subunit B (Orientia tsutsugamushi (strain Ikeda) (Rickettsia tsutsugamushi)).